Here is an 869-residue protein sequence, read N- to C-terminus: H(+)/Cl(-) exchange transporter 6 (869 aa).

Topologically, residues 1-80 (MAGCRGSLCC…KKGRWYEVVK (80 aa)) are cytoplasmic. 2 helical membrane-spanning segments follow: residues 81 to 113 (WTVVFAIGVCTGLVGLFVDFFVQLFTQLKFGVV) and 128 to 150 (LSLLELLGFNLTFVFLASLLVLI). The Selectivity filter part_1 signature appears at 156–160 (GSGIP). Residue serine 157 participates in chloride binding. An intramembrane region (helical) is located at residues 159–166 (IPEIKCYL). A run of 2 helical transmembrane segments spans residues 176 to 194 (RLRTLLCKVFGVLFSVAGG) and 200 to 217 (EGPMIHSGAVVGAGLPQF). The short motif at 198–202 (GKEGP) is the Selectivity filter part_2 element. 2 consecutive intramembrane regions (helical) follow at residues 241 to 253 (FVSAGAAAGIAAA) and 257 to 265 (PIGATLFSL). The next 3 helical transmembrane spans lie at 277–294 (TWKVLFCSMSATFTLNFF), 335–364 (GFFVVMGVIGGLLGATFNCLNKRLAKYRMR), and 371–392 (KLVRVLESLLVSLVTTLVVFVA). N-linked (GlcNAc...) asparagine glycosylation is found at asparagine 410, asparagine 422, and asparagine 432. A run of 2 helical transmembrane segments spans residues 462-481 (PITLALFFVLYFLLACWTYG) and 487-511 (GLFVPSLLCGAAFGRLVANVLKSYI). Positions 487–491 (GLFVP) match the Selectivity filter part_3 motif. Phenylalanine 489 lines the chloride pocket. Residues 519–533 (GTFSLIGAAALLGGV) constitute an intramembrane region (helical). Residues 534-536 (VRM) constitute an intramembrane region (note=Loop between two helices). An intramembrane region (helical) is located at residues 537–548 (TISLTVILIEST). The note=Loop between two helices intramembrane region spans 549-552 (NEIT). Residues 553–571 (YGLPIMITLMVAKWTGDFF) form a helical membrane-spanning segment. The Cytoplasmic segment spans residues 572-869 (NKGIYDIHVG…ARLRQHYQTI (298 aa)). A chloride-binding site is contributed by tyrosine 576. The region spanning 605-662 (MEPNLTYVYPHTRIQSLVSILRTTVHHAFPVVTENRGNEKEFMKGNQLISNNIKFKKS) is the CBS 1 domain. An ATP-binding site is contributed by 630-632 (HHA). Residues 668-687 (AGEQRRRSQSMKSYPSSELR) are disordered. The segment covering 677 to 686 (SMKSYPSSEL) has biased composition (polar residues). Serine 773 carries the post-translational modification Phosphoserine. The 62-residue stretch at 807 to 868 (MNPSPFTVSP…QARLRQHYQT (62 aa)) folds into the CBS 2 domain. 849–852 (TRHN) serves as a coordination point for ATP.

This sequence belongs to the chloride channel (TC 2.A.49) family. ClC-6/CLCN6 subfamily. Post-translationally, N-glycosylated on several asparagine residues.

The protein localises to the late endosome membrane. The catalysed reaction is 2 chloride(in) + H(+)(out) = 2 chloride(out) + H(+)(in). In terms of biological role, voltage-gated channel mediating the exchange of chloride ions against protons. Functions as antiporter and contributes to the acidification of the late endosome lumen. The CLC channel family contains both chloride channels and proton-coupled anion transporters that exchange chloride or another anion for protons. The presence of conserved gating glutamate residues is typical for family members that function as antiporters. The protein is H(+)/Cl(-) exchange transporter 6 (CLCN6) of Oryctolagus cuniculus (Rabbit).